The sequence spans 626 residues: Chaperone protein HtpG (626 aa).

An a; substrate-binding region spans residues 1 to 339 (MSQNQETRGF…SNDLPLNVSR (339 aa)). The segment at 340 to 555 (EILQDNKITA…NDQMTTQMAK (216 aa)) is b. The tract at residues 556-626 (LFAAAGQPVP…FIKRINKLLG (71 aa)) is c.

The protein belongs to the heat shock protein 90 family. Homodimer.

The protein resides in the cytoplasm. Molecular chaperone. Has ATPase activity. This is Chaperone protein HtpG from Haemophilus influenzae (strain 86-028NP).